The following is a 514-amino-acid chain: Na(+)/H(+) antiporter NhaB (514 aa).

Transmembrane regions (helical) follow at residues 23–43, 63–83, 97–117, 120–140, 144–164, 202–222, 238–258, 303–323, 357–377, 391–411, 447–467, and 475–495; these read LALL…PFIA, PLLP…TSAA, LLLM…LFIF, LLLS…AAAF, FLDA…FYGI, LMMH…VGEP, FFLR…LTCM, AIIG…VGLI, LTVF…APII, LFYL…VGTI, ATPN…APLI, and VWMA…CVEF.

The protein belongs to the NhaB Na(+)/H(+) (TC 2.A.34) antiporter family.

The protein resides in the cell inner membrane. It carries out the reaction 2 Na(+)(in) + 3 H(+)(out) = 2 Na(+)(out) + 3 H(+)(in). Its function is as follows. Na(+)/H(+) antiporter that extrudes sodium in exchange for external protons. The chain is Na(+)/H(+) antiporter NhaB from Salmonella heidelberg (strain SL476).